We begin with the raw amino-acid sequence, 561 residues long: Potassium-transporting ATPase potassium-binding subunit (561 aa).

12 helical membrane-spanning segments follow: residues 5–25 (LAAG…YVPV), 60–80 (YGYA…LYAL), 86–106 (VLPL…NTAV), 131–151 (GLAV…VALI), 177–197 (ILLP…VIQS), 247–267 (PTPV…VSLT), 281–301 (LTLL…TLAA), 324–344 (FGIP…TGAV), 376–396 (GLYG…LLVG), 415–435 (ALSV…TVIL), 488–508 (ALGL…LALA), and 537–557 (GTVV…GPIA).

Belongs to the KdpA family. As to quaternary structure, the system is composed of three essential subunits: KdpA, KdpB and KdpC.

The protein localises to the cell membrane. Its function is as follows. Part of the high-affinity ATP-driven potassium transport (or Kdp) system, which catalyzes the hydrolysis of ATP coupled with the electrogenic transport of potassium into the cytoplasm. This subunit binds the extracellular potassium ions and delivers the ions to the membrane domain of KdpB through an intramembrane tunnel. This Rhodococcus opacus (strain B4) protein is Potassium-transporting ATPase potassium-binding subunit.